Here is a 157-residue protein sequence, read N- to C-terminus: Transmembrane protein 50A (157 aa).

Serine 2 is modified (N-acetylserine). A Phosphoserine modification is found at serine 2. The next 4 helical transmembrane spans lie at 26–46, 58–78, 95–115, and 126–146; these read IAAG…AVMY, TCGV…NGQV, IWLF…MWIL, and VVYP…GGLV.

This sequence belongs to the UPF0220 family.

Its subcellular location is the membrane. This is Transmembrane protein 50A (Tmem50a) from Mus musculus (Mouse).